We begin with the raw amino-acid sequence, 465 residues long: Lactaldehyde dehydrogenase (465 aa).

220–225 lines the NAD(+) pocket; that stretch reads GSVEVG. Catalysis depends on residues Glu-240 and Cys-274.

This sequence belongs to the aldehyde dehydrogenase family. Homotetramer.

It catalyses the reaction (S)-lactaldehyde + NAD(+) + H2O = (S)-lactate + NADH + 2 H(+). Its pathway is cofactor biosynthesis; coenzyme F420 biosynthesis. Its function is as follows. Involved in F420 biosynthesis through the oxidation of lactaldehyde to lactate. The protein is Lactaldehyde dehydrogenase of Methanococcus aeolicus (strain ATCC BAA-1280 / DSM 17508 / OCM 812 / Nankai-3).